Consider the following 419-residue polypeptide: Gamma-glutamyl phosphate reductase (419 aa).

The protein belongs to the gamma-glutamyl phosphate reductase family.

The protein localises to the cytoplasm. It carries out the reaction L-glutamate 5-semialdehyde + phosphate + NADP(+) = L-glutamyl 5-phosphate + NADPH + H(+). It participates in amino-acid biosynthesis; L-proline biosynthesis; L-glutamate 5-semialdehyde from L-glutamate: step 2/2. Its function is as follows. Catalyzes the NADPH-dependent reduction of L-glutamate 5-phosphate into L-glutamate 5-semialdehyde and phosphate. The product spontaneously undergoes cyclization to form 1-pyrroline-5-carboxylate. This is Gamma-glutamyl phosphate reductase from Bordetella parapertussis (strain 12822 / ATCC BAA-587 / NCTC 13253).